A 154-amino-acid polypeptide reads, in one-letter code: Ribosome maturation factor RimP (154 aa).

The protein belongs to the RimP family.

It localises to the cytoplasm. Required for maturation of 30S ribosomal subunits. The sequence is that of Ribosome maturation factor RimP from Clostridium perfringens (strain ATCC 13124 / DSM 756 / JCM 1290 / NCIMB 6125 / NCTC 8237 / Type A).